The chain runs to 294 residues: UPF0761 membrane protein YPTB0027 (294 aa).

The next 7 helical transmembrane spans lie at leucine 44–phenylalanine 64, isoleucine 67–isoleucine 87, glycine 108–tryptophan 128, leucine 136–alanine 156, valine 185–valine 205, alanine 212–methionine 232, and valine 246–leucine 266.

The protein belongs to the UPF0761 family.

The protein localises to the cell inner membrane. This chain is UPF0761 membrane protein YPTB0027, found in Yersinia pseudotuberculosis serotype I (strain IP32953).